The following is a 229-amino-acid chain: Response regulator SaeR (229 aa).

The Response regulatory domain occupies 3–116 (HLLIVDDEKD…ELVLRTNNLL (114 aa)). Asp51 carries the 4-aspartylphosphate modification. A DNA-binding region (ompR/PhoB-type) is located at residues 128–227 (IEQLEFDGLV…VWGLGYKFER (100 aa)).

Post-translationally, phosphorylated by SaeS.

The protein resides in the cytoplasm. Functionally, member of the two-component regulatory system SaeR/SaeS. Probably functions as a transcriptional regulator via a specific DNA-binding domain, recognizing motifs near the promoter sequences of target genes. The polypeptide is Response regulator SaeR (saeR) (Staphylococcus epidermidis (strain ATCC 35984 / DSM 28319 / BCRC 17069 / CCUG 31568 / BM 3577 / RP62A)).